Reading from the N-terminus, the 1076-residue chain is GPI inositol-deacylase A (1076 aa).

A helical membrane pass occupies residues 3 to 23 (IATFPALAITALALVLWATVA). N-linked (GlcNAc...) asparagine glycosylation is found at Asn48 and Asn119. The active site involves Ser240. The N-linked (GlcNAc...) asparagine glycan is linked to Asn404. Transmembrane regions (helical) follow at residues 765 to 785 (FLGFYRVMFAIFPMFVFLCLL) and 815 to 835 (WILAGSCAIPFVPHVLVSLLY). N-linked (GlcNAc...) asparagine glycosylation is present at Asn849. Helical transmembrane passes span 855-875 (FLGPVSLVIATGIVVVLHWLL), 877-897 (ILTLWVCQCYYMLGLAPIAPE), and 910-930 (FLLLLVFKIVPHQFAFMVAVL). Asn952 and Asn966 each carry an N-linked (GlcNAc...) asparagine glycan. Transmembrane regions (helical) follow at residues 970-990 (SLLLLLVLLLPINAPTLVVWL), 1006-1026 (EVSAILPILLLVLTASRGIMI), and 1035-1055 (IYATFAFLAYFALFVLFHGVV).

It belongs to the GPI inositol-deacylase family.

The protein localises to the endoplasmic reticulum membrane. Its function is as follows. Involved in inositol deacylation of GPI-anchored proteins which plays important roles in the quality control and ER-associated degradation of GPI-anchored proteins. This is GPI inositol-deacylase A (BST1A) from Yarrowia lipolytica (strain CLIB 122 / E 150) (Yeast).